The sequence spans 594 residues: Microtubule-associated protein VP8 (594 aa).

Its subcellular location is the virion. The protein resides in the host cytoplasm. The protein localises to the host cytoskeleton. Functionally, minor inner capsid component. Displays NTPase and RNA 5'-triphosphatase (RTPase) activities. May function as a cofactor of polymerase VP1. Associates with microtubules and plays a role in the formation, structural organization and morphology of viral inclusions, where the assembly of cores and the replication of viral RNA occur. This is Microtubule-associated protein VP8 (S8) from Saccharum officinarum (Sugarcane).